The chain runs to 237 residues: Ribose-5-phosphate isomerase A (237 aa).

Residues 33-36, 90-93, and 103-106 each bind substrate; these read TGST, DGAD, and KGGG. Glu112 (proton acceptor) is an active-site residue. Residue Lys130 coordinates substrate.

The protein belongs to the ribose 5-phosphate isomerase family. In terms of assembly, homodimer.

It carries out the reaction aldehydo-D-ribose 5-phosphate = D-ribulose 5-phosphate. It participates in carbohydrate degradation; pentose phosphate pathway; D-ribose 5-phosphate from D-ribulose 5-phosphate (non-oxidative stage): step 1/1. Functionally, catalyzes the reversible conversion of ribose-5-phosphate to ribulose 5-phosphate. This chain is Ribose-5-phosphate isomerase A, found in Gloeothece citriformis (strain PCC 7424) (Cyanothece sp. (strain PCC 7424)).